Consider the following 343-residue polypeptide: UDP-3-O-acylglucosamine N-acyltransferase (343 aa).

His-236 (proton acceptor) is an active-site residue.

Belongs to the transferase hexapeptide repeat family. LpxD subfamily. Homotrimer.

The enzyme catalyses a UDP-3-O-[(3R)-3-hydroxyacyl]-alpha-D-glucosamine + a (3R)-hydroxyacyl-[ACP] = a UDP-2-N,3-O-bis[(3R)-3-hydroxyacyl]-alpha-D-glucosamine + holo-[ACP] + H(+). Its pathway is bacterial outer membrane biogenesis; LPS lipid A biosynthesis. Functionally, catalyzes the N-acylation of UDP-3-O-acylglucosamine using 3-hydroxyacyl-ACP as the acyl donor. Is involved in the biosynthesis of lipid A, a phosphorylated glycolipid that anchors the lipopolysaccharide to the outer membrane of the cell. This Syntrophotalea carbinolica (strain DSM 2380 / NBRC 103641 / GraBd1) (Pelobacter carbinolicus) protein is UDP-3-O-acylglucosamine N-acyltransferase.